We begin with the raw amino-acid sequence, 449 residues long: Probable mitochondrial chaperone bcs1 (449 aa).

Over 1 to 20 the chain is Mitochondrial intermembrane; it reads MDNIGAADAATSSGISGLLS. The helical transmembrane segment at 21 to 41 threads the bilayer; it reads GNSFLGAGIGLMGFGAGLAIL. Over 42 to 449 the chain is Mitochondrial matrix; sequence RRGLISGASL…FNVHRKSLSV (408 aa). ATP is bound at residue 249 to 256; sequence GPPGSGKT.

This sequence belongs to the AAA ATPase family. BCS1 subfamily.

The protein localises to the mitochondrion inner membrane. It catalyses the reaction ATP + H2O = ADP + phosphate + H(+). Chaperone necessary for the incorporation of Rieske iron-sulfur protein rip1 into the mitochondrial respiratory chain complex III. This Schizosaccharomyces pombe (strain 972 / ATCC 24843) (Fission yeast) protein is Probable mitochondrial chaperone bcs1.